Here is a 429-residue protein sequence, read N- to C-terminus: Enolase (429 aa).

Residue Gln-163 participates in (2R)-2-phosphoglycerate binding. Glu-205 acts as the Proton donor in catalysis. The Mg(2+) site is built by Asp-242, Glu-285, and Asp-312. Positions 337, 366, 367, and 388 each coordinate (2R)-2-phosphoglycerate. Residue Lys-337 is the Proton acceptor of the active site.

Belongs to the enolase family. It depends on Mg(2+) as a cofactor.

The protein resides in the cytoplasm. The protein localises to the secreted. It localises to the cell surface. The enzyme catalyses (2R)-2-phosphoglycerate = phosphoenolpyruvate + H2O. The protein operates within carbohydrate degradation; glycolysis; pyruvate from D-glyceraldehyde 3-phosphate: step 4/5. In terms of biological role, catalyzes the reversible conversion of 2-phosphoglycerate (2-PG) into phosphoenolpyruvate (PEP). It is essential for the degradation of carbohydrates via glycolysis. The polypeptide is Enolase (Methylorubrum extorquens (strain PA1) (Methylobacterium extorquens)).